The following is a 418-amino-acid chain: Hydroxysqualene dehydroxylase (418 aa).

Belongs to the HpnE family.

The enzyme catalyses squalene + FAD + H2O + H(+) = hydroxysqualene + FADH2. Its pathway is secondary metabolite biosynthesis; hopanoid biosynthesis. Functionally, involved in the biosynthesis of the hopanoid precursor squalene (SQ) from farnesyl diphosphate (FPP). Catalyzes the third (last) step, the reduction of hydroxysqualene (HSQ) to SQ. The protein is Hydroxysqualene dehydroxylase of Rhodopseudomonas palustris (strain ATCC BAA-98 / CGA009).